Reading from the N-terminus, the 179-residue chain is Ribosome maturation factor RimM (179 aa).

The PRC barrel domain occupies 102–175; the sequence is VEMWWDRDLV…RIVVDPPPGL (74 aa).

This sequence belongs to the RimM family. As to quaternary structure, binds ribosomal protein uS19.

It is found in the cytoplasm. In terms of biological role, an accessory protein needed during the final step in the assembly of 30S ribosomal subunit, possibly for assembly of the head region. Essential for efficient processing of 16S rRNA. May be needed both before and after RbfA during the maturation of 16S rRNA. It has affinity for free ribosomal 30S subunits but not for 70S ribosomes. This is Ribosome maturation factor RimM from Frankia casuarinae (strain DSM 45818 / CECT 9043 / HFP020203 / CcI3).